The following is a 356-amino-acid chain: Histidinol-phosphate aminotransferase 1 (356 aa).

An N6-(pyridoxal phosphate)lysine modification is found at Lys213.

Belongs to the class-II pyridoxal-phosphate-dependent aminotransferase family. Histidinol-phosphate aminotransferase subfamily. In terms of assembly, homodimer. It depends on pyridoxal 5'-phosphate as a cofactor.

The enzyme catalyses L-histidinol phosphate + 2-oxoglutarate = 3-(imidazol-4-yl)-2-oxopropyl phosphate + L-glutamate. It functions in the pathway amino-acid biosynthesis; L-histidine biosynthesis; L-histidine from 5-phospho-alpha-D-ribose 1-diphosphate: step 7/9. The chain is Histidinol-phosphate aminotransferase 1 (hisC1) from Bordetella parapertussis (strain 12822 / ATCC BAA-587 / NCTC 13253).